The following is a 300-amino-acid chain: Ribosomal protein L11 methyltransferase (300 aa).

The S-adenosyl-L-methionine site is built by threonine 152, glycine 173, aspartate 195, and asparagine 234.

It belongs to the methyltransferase superfamily. PrmA family.

It is found in the cytoplasm. It catalyses the reaction L-lysyl-[protein] + 3 S-adenosyl-L-methionine = N(6),N(6),N(6)-trimethyl-L-lysyl-[protein] + 3 S-adenosyl-L-homocysteine + 3 H(+). In terms of biological role, methylates ribosomal protein L11. This is Ribosomal protein L11 methyltransferase from Burkholderia pseudomallei (strain K96243).